Consider the following 1074-residue polypeptide: DNA double-strand break repair Rad50 ATPase (1074 aa).

Residues arginine 12, asparagine 32–serine 38, and glutamine 142 each bind ATP. Coiled-coil stretches lie at residues glutamate 355–alanine 402 and asparagine 452–glycine 506. The Zinc-hook domain maps to leucine 512–lysine 611. 2 residues coordinate Zn(2+): cysteine 559 and cysteine 562. Coiled-coil stretches lie at residues threonine 574–lysine 611, leucine 649–glutamine 678, lysine 749–glutamate 823, and threonine 865–leucine 895. Leucine 973–glutamate 978 is an ATP binding site.

This sequence belongs to the SMC family. RAD50 subfamily. As to quaternary structure, homodimer. Forms a heterotetramer composed of two Mre11 subunits and two Rad50 subunits. The cofactor is Zn(2+).

In terms of biological role, part of the Rad50/Mre11 complex, which is involved in the early steps of DNA double-strand break (DSB) repair. The complex may facilitate opening of the processed DNA ends to aid in the recruitment of HerA and NurA. Rad50 controls the balance between DNA end bridging and DNA resection via ATP-dependent structural rearrangements of the Rad50/Mre11 complex. In Methanosarcina acetivorans (strain ATCC 35395 / DSM 2834 / JCM 12185 / C2A), this protein is DNA double-strand break repair Rad50 ATPase.